The chain runs to 401 residues: Odorant receptor 88a (401 aa).

Residues Met-1–Gln-26 are Cytoplasmic-facing. Residues Met-27–Val-47 form a helical membrane-spanning segment. The Extracellular portion of the chain corresponds to Pro-48 to Ser-52. The chain crosses the membrane as a helical span at residues Ala-53–Leu-73. Over Gly-74–Arg-142 the chain is Cytoplasmic. A helical transmembrane segment spans residues Ile-143–Thr-163. The Extracellular segment spans residues His-164–Asn-191. Residues Phe-192 to Val-212 traverse the membrane as a helical segment. The Cytoplasmic segment spans residues Thr-213–Lys-277. A helical transmembrane segment spans residues Val-278–Leu-298. Over Ser-299–Asp-303 the chain is Extracellular. Residues Val-304–Ile-324 form a helical membrane-spanning segment. At Cys-325 to Gln-370 the chain is on the cytoplasmic side. Residues Leu-371 to Ala-391 traverse the membrane as a helical segment. Topologically, residues Tyr-392 to His-401 are extracellular.

Belongs to the insect chemoreceptor superfamily. Heteromeric odorant receptor channel (TC 1.A.69) family. Or49a subfamily. In terms of assembly, interacts with Orco. Complexes exist early in the endomembrane system in olfactory sensory neurons (OSNs), coupling these complexes to the conserved ciliary trafficking pathway. As to expression, expressed in olfactory sensory neurons in the antenna.

It localises to the cell membrane. Its function is as follows. Odorant receptor which mediates acceptance or avoidance behavior, depending on its substrates. The odorant receptor repertoire encodes a large collection of odor stimuli that vary widely in identity, intensity, and duration. May form a complex with Orco to form odorant-sensing units, providing sensitive and prolonged odorant signaling and calcium permeability. This chain is Odorant receptor 88a (Or88a), found in Drosophila melanogaster (Fruit fly).